The chain runs to 181 residues: MRGTWSMSVPSDGRNVVLTGFMGTGKSTVGKLLARRLGYRFSDLDALIVERAGISINEIFERYGEQRFRELETEAIRSLGGVSGRVVATGGGAVIAPRNRVLLREAGLVVNLTASLEVILSRLKGDRERPLLKSNNTPEALAALMTARENAYADADLRIDTAGKSVEDVVTEIATFVREHQ.

Residue 23–28 (GTGKST) coordinates ATP. S27 is a binding site for Mg(2+). Residues D45, R69, and G91 each coordinate substrate. R129 contributes to the ATP binding site. A substrate-binding site is contributed by R148.

It belongs to the shikimate kinase family. In terms of assembly, monomer. Requires Mg(2+) as cofactor.

It is found in the cytoplasm. It catalyses the reaction shikimate + ATP = 3-phosphoshikimate + ADP + H(+). Its pathway is metabolic intermediate biosynthesis; chorismate biosynthesis; chorismate from D-erythrose 4-phosphate and phosphoenolpyruvate: step 5/7. Catalyzes the specific phosphorylation of the 3-hydroxyl group of shikimic acid using ATP as a cosubstrate. The chain is Shikimate kinase from Geobacter sulfurreducens (strain ATCC 51573 / DSM 12127 / PCA).